The primary structure comprises 106 residues: UPF0122 protein Exig_1902 (106 aa).

This sequence belongs to the UPF0122 family.

Functionally, might take part in the signal recognition particle (SRP) pathway. This is inferred from the conservation of its genetic proximity to ftsY/ffh. May be a regulatory protein. The polypeptide is UPF0122 protein Exig_1902 (Exiguobacterium sibiricum (strain DSM 17290 / CCUG 55495 / CIP 109462 / JCM 13490 / 255-15)).